The chain runs to 1044 residues: Protein ITPRID1 (1044 aa).

Residues 1–14 (MMAQKSQGSDNLQE) are compositionally biased toward polar residues. Disordered regions lie at residues 1–20 (MMAQKSQGSDNLQEGQEKSK), 230–251 (EEKAGGESVQRTSVSAAKEHRR), 388–489 (MEEV…SSQE), and 583–607 (PEGAGKVQSHHNESQRSPGNDHTQD). Residues 388–398 (MEEVQSFEEET) show a composition bias toward acidic residues. Composition is skewed to polar residues over residues 460 to 469 (HSLVSSQDCQ) and 480 to 489 (RASMSFSSQE). The stretch at 896-937 (SRDMSEEEREEAEQLQTLREALRQQVAELEFQLGDRAQQIRE) forms a coiled coil.

The polypeptide is Protein ITPRID1 (Homo sapiens (Human)).